The chain runs to 125 residues: Small ribosomal subunit protein bS6 (125 aa).

It belongs to the bacterial ribosomal protein bS6 family.

Binds together with bS18 to 16S ribosomal RNA. This is Small ribosomal subunit protein bS6 from Campylobacter jejuni (strain RM1221).